Here is a 375-residue protein sequence, read N- to C-terminus: Vasculin (375 aa).

2 disordered regions span residues 49-109 (SSDA…TSEI) and 356-375 (DSVQKEDSETSSSSDTSDDE). Residues 96 to 108 (MKSQLHSENNTSE) are compositionally biased toward polar residues. The segment covering 365–375 (TSSSSDTSDDE) has biased composition (low complexity).

Belongs to the vasculin family.

It localises to the nucleus. In terms of biological role, functions as a GC-rich promoter-specific transactivating transcription factor. The sequence is that of Vasculin (gpbp1) from Xenopus tropicalis (Western clawed frog).